The primary structure comprises 1193 residues: Laminin subunit gamma-2 (1193 aa).

Residues 1-21 (MPALWLGCCLCFSLLLPAARA) form the signal peptide. 12 disulfide bridges follow: Cys-28–Cys-37, Cys-30–Cys-53, Cys-56–Cys-65, Cys-68–Cys-81, Cys-84–Cys-96, Cys-86–Cys-102, Cys-104–Cys-113, Cys-116–Cys-128, Cys-139–Cys-150, Cys-141–Cys-155, Cys-157–Cys-166, and Cys-169–Cys-184. 3 Laminin EGF-like domains span residues 28 to 83 (CDCN…RCLP), 84 to 130 (CNCN…GCTQ), and 139 to 186 (CDCD…GCTQ). The Laminin EGF-like 4; first part domain maps to 187-196 (CFCYGHSASC). Residues 213 to 381 (QDVDGWKAVQ…SGAPAPWVEQ (169 aa)) form the Laminin IV type A domain. 2 N-linked (GlcNAc...) asparagine glycosylation sites follow: Asn-342 and Asn-362. In terms of domain architecture, Laminin EGF-like 4; second part spans 382–415 (CICPVGYKGQFCQDCASGYKRDSARLGPFGTCIP). 3 consecutive Laminin EGF-like domains span residues 416–461 (CNCQ…SCKP), 462–516 (CPCH…PCQP), and 517–572 (CQCN…KCRA). Intrachain disulfides connect Cys-462–Cys-470, Cys-464–Cys-481, Cys-484–Cys-493, Cys-496–Cys-514, Cys-517–Cys-531, Cys-519–Cys-538, Cys-541–Cys-550, Cys-553–Cys-570, Cys-573–Cys-585, Cys-575–Cys-591, and Cys-593–Cys-602. Positions 573-602 (CNCNPMGSEPVGCRSDGTCVCKPGFGGPNC) constitute a Laminin EGF-like 8; truncated domain. The segment at 603 to 1193 (EHGAFSCPAC…CYNTQALEQQ (591 aa)) is domain II and I. Positions 611–718 (ACYNQVKIQM…GSQYQNRVRD (108 aa)) form a coiled coil. Residues Ser-803 and Ser-805 are each glycosylated (O-linked (Xyl...) (chondroitin sulfate) serine). Coiled coils occupy residues 811–1076 (AVVQ…AVQM) and 1117–1193 (EEGL…LEQQ). N-linked (GlcNAc...) asparagine glycans are attached at residues Asn-942 and Asn-1033.

Laminin is a complex glycoprotein, consisting of three different polypeptide chains (alpha, beta, gamma), which are bound to each other by disulfide bonds into a cross-shaped molecule comprising one long and three short arms with globules at each end. Gamma-2 is a subunit of laminin-5 (laminin-332 or epiligrin/kalinin/nicein). In terms of processing, O-glycosylated; contains chondroitin sulfate (CS). CS attachment is on either Ser-803 or Ser-805. The large variant is expressed only in specific epithelial cells of embryonic and neonatal tissues. In 17-week old embryo the small variant is found in cerebral cortex, lung, and distal tubes of kidney, but not in epithelia except for distal tubuli.

The protein localises to the secreted. It is found in the extracellular space. It localises to the extracellular matrix. Its subcellular location is the basement membrane. Its function is as follows. Binding to cells via a high affinity receptor, laminin is thought to mediate the attachment, migration and organization of cells into tissues during embryonic development by interacting with other extracellular matrix components. Ladsin exerts cell-scattering activity toward a wide variety of cells, including epithelial, endothelial, and fibroblastic cells. This is Laminin subunit gamma-2 (LAMC2) from Homo sapiens (Human).